The chain runs to 365 residues: Probable protein kinase At2g41970 (365 aa).

The tract at residues 1 to 50 is disordered; the sequence is MFCCGGADEEPAGPPANQYAAPPNKAGNPNFGGGNRGEPRNPNAPRSGAP. Residues 73 to 354 enclose the Protein kinase domain; that stretch reads FGNKALIGEG…IVVKALQPLL (282 aa). ATP-binding positions include 79–87 and Lys100; that span reads IGEGSYGRV. Tyr146 bears the Phosphotyrosine mark. The Proton acceptor role is filled by Asp204. 2 positions are modified to phosphoserine: Ser208 and Ser238. 2 positions are modified to phosphothreonine: Thr239 and Thr244. Residue Tyr252 is modified to Phosphotyrosine.

This sequence belongs to the protein kinase superfamily. Tyr protein kinase family.

The sequence is that of Probable protein kinase At2g41970 from Arabidopsis thaliana (Mouse-ear cress).